The chain runs to 490 residues: Hydroxysteroid dehydrogenase-like protein 2 (490 aa).

NADP(+) is bound by residues 17-23 (GASRGIG), lysine 42, and aspartate 74. Lysine 42 carries the N6-(2-hydroxyisobutyryl)lysine modification. Position 116 is an N6-acetyllysine (lysine 116). Tyrosine 168 functions as the Proton acceptor in the catalytic mechanism. NADP(+) is bound at residue lysine 172. Basic and acidic residues predominate over residues 282–301 (MEEKESNDSVPEVKEEKLQL). The segment at 282–370 (MEEKESNDSV…PRQQPQPFVQ (89 aa)) is disordered. Over residues 302 to 367 (QEESQLQKQP…QPRPRQQPQP (66 aa)) the composition is skewed to low complexity. In terms of domain architecture, SCP2 spans 380–487 (GAVEETFRIV…KLEKLMTQMN (108 aa)). Lysine 390 carries the N6-succinyllysine modification.

The protein belongs to the short-chain dehydrogenases/reductases (SDR) family. As to expression, widely expressed.

It localises to the peroxisome. The protein resides in the mitochondrion. Has apparently no steroid dehydrogenase activity. Controls bile acid (BA) and lipid metabolism in response to nutritional cues. In Mus musculus (Mouse), this protein is Hydroxysteroid dehydrogenase-like protein 2 (Hsdl2).